Consider the following 879-residue polypeptide: Alanine--tRNA ligase (879 aa).

The Zn(2+) site is built by histidine 566, histidine 570, cysteine 668, and histidine 672.

This sequence belongs to the class-II aminoacyl-tRNA synthetase family. The cofactor is Zn(2+).

It localises to the cytoplasm. The catalysed reaction is tRNA(Ala) + L-alanine + ATP = L-alanyl-tRNA(Ala) + AMP + diphosphate. Its function is as follows. Catalyzes the attachment of alanine to tRNA(Ala) in a two-step reaction: alanine is first activated by ATP to form Ala-AMP and then transferred to the acceptor end of tRNA(Ala). Also edits incorrectly charged Ser-tRNA(Ala) and Gly-tRNA(Ala) via its editing domain. This is Alanine--tRNA ligase from Clostridium botulinum (strain Hall / ATCC 3502 / NCTC 13319 / Type A).